A 201-amino-acid polypeptide reads, in one-letter code: Probable GTP-binding protein EngB (201 aa).

The 176-residue stretch at 22–197 (TFPEYAFIGR…LNYIESINKE (176 aa)) folds into the EngB-type G domain. Residues 30–37 (GRSNVGKS), 57–61 (GKTML), 75–78 (DLPG), 142–145 (TKAD), and 175–178 (ITSS) contribute to the GTP site. Positions 37 and 59 each coordinate Mg(2+).

The protein belongs to the TRAFAC class TrmE-Era-EngA-EngB-Septin-like GTPase superfamily. EngB GTPase family. Mg(2+) serves as cofactor.

Functionally, necessary for normal cell division and for the maintenance of normal septation. The chain is Probable GTP-binding protein EngB from Bacteroides fragilis (strain ATCC 25285 / DSM 2151 / CCUG 4856 / JCM 11019 / LMG 10263 / NCTC 9343 / Onslow / VPI 2553 / EN-2).